The chain runs to 560 residues: Cytosolic purine 5'-nucleotidase (560 aa).

The active-site Nucleophile is aspartate 52. Residues aspartate 52 and aspartate 54 each coordinate IMP. Mg(2+) is bound by residues aspartate 52 and aspartate 54. The active-site Proton donor is the aspartate 54. ATP contacts are provided by arginine 144 and asparagine 154. IMP-binding residues include arginine 202, aspartate 206, lysine 215, threonine 249, asparagine 250, serine 251, and lysine 292. Aspartate 351 contacts Mg(2+). Serine 418 carries the post-translational modification Phosphoserine. ATP is bound by residues glutamine 453 and arginine 456. 3 positions are modified to phosphoserine: serine 502, serine 511, and serine 527. The tract at residues 541 to 560 (PQEITHCHDEDDDEEEEEEE) is disordered. Positions 548-560 (HDEDDDEEEEEEE) are required for tetramer assembly. Over residues 550–560 (EDDDEEEEEEE) the composition is skewed to acidic residues.

It belongs to the 5'(3')-deoxyribonucleotidase family. As to quaternary structure, homotetramer. It depends on Mg(2+) as a cofactor.

The protein resides in the cytoplasm. It is found in the cytosol. It carries out the reaction a ribonucleoside 5'-phosphate + H2O = a ribonucleoside + phosphate. It catalyses the reaction a 2'-deoxyribonucleoside + a ribonucleoside 5'-phosphate = a ribonucleoside + a 2'-deoxyribonucleoside 5'-phosphate. The catalysed reaction is IMP + H2O = inosine + phosphate. The enzyme catalyses GMP + H2O = guanosine + phosphate. It carries out the reaction dGMP + H2O = 2'-deoxyguanosine + phosphate. It catalyses the reaction dIMP + H2O = 2'-deoxyinosine + phosphate. The catalysed reaction is XMP + H2O = xanthosine + phosphate. The enzyme catalyses inosine + GMP = guanosine + IMP. It carries out the reaction dGMP + inosine = 2'-deoxyguanosine + IMP. It catalyses the reaction dIMP + inosine = 2'-deoxyinosine + IMP. The catalysed reaction is inosine + UMP = uridine + IMP. The enzyme catalyses inosine + CMP = cytidine + IMP. It carries out the reaction inosine + AMP = IMP + adenosine. Allosterically activated by various compounds including ATP, 2,3-BPG/2,3-Bisphosphoglyceric acid and Ap4A/P1,P4-bis(5'-adenosyl) tetraphosphate. Binding of an allosteric activator is a prerequisiste to magnesium and substrate binding. Inhibited by inorganic phosphate. In terms of biological role, broad specificity cytosolic 5'-nucleotidase that catalyzes the dephosphorylation of 6-hydroxypurine nucleoside 5'-monophosphates. In addition, possesses a phosphotransferase activity by which it can transfer a phosphate from a donor nucleoside monophosphate to an acceptor nucleoside, preferably inosine, deoxyinosine and guanosine. Has the highest activities for IMP and GMP followed by dIMP, dGMP and XMP. Could also catalyze the transfer of phosphates from pyrimidine monophosphates but with lower efficiency. Through these activities regulates the purine nucleoside/nucleotide pools within the cell. The sequence is that of Cytosolic purine 5'-nucleotidase from Mus musculus (Mouse).